The following is a 967-amino-acid chain: Isoleucine--tRNA ligase 2 (967 aa).

The 'HIGH' region signature appears at 58–68 (PYANGDIHIGH). Over residues 437–446 (AVTEEAGATG) the composition is skewed to low complexity. The interval 437–466 (AVTEEAGATGEARKVGKAEEAEEAGPAKTL) is disordered. An L-isoleucyl-5'-AMP-binding site is contributed by E598. A 'KMSKS' region motif is present at residues 639 to 643 (KMSKS). K642 is an ATP binding site. The Zn(2+) site is built by C922, C925, C942, and C945.

Belongs to the class-I aminoacyl-tRNA synthetase family. IleS type 1 subfamily. In terms of assembly, monomer. Requires Zn(2+) as cofactor.

It localises to the cytoplasm. The enzyme catalyses tRNA(Ile) + L-isoleucine + ATP = L-isoleucyl-tRNA(Ile) + AMP + diphosphate. In terms of biological role, catalyzes the attachment of isoleucine to tRNA(Ile). As IleRS can inadvertently accommodate and process structurally similar amino acids such as valine, to avoid such errors it has two additional distinct tRNA(Ile)-dependent editing activities. One activity is designated as 'pretransfer' editing and involves the hydrolysis of activated Val-AMP. The other activity is designated 'posttransfer' editing and involves deacylation of mischarged Val-tRNA(Ile). This is Isoleucine--tRNA ligase 2 from Burkholderia mallei (strain ATCC 23344).